The sequence spans 48 residues: Large ribosomal subunit protein bL33A (48 aa).

It belongs to the bacterial ribosomal protein bL33 family.

This Limosilactobacillus fermentum (strain NBRC 3956 / LMG 18251) (Lactobacillus fermentum) protein is Large ribosomal subunit protein bL33A.